The sequence spans 1080 residues: Headcase protein (1080 aa).

Disordered stretches follow at residues Met1–Gln27, Ile181–Gly277, Ser310–Ser335, Pro655–Lys693, Ser798–Thr826, Ser891–Lys916, and Gln940–Ser974. Polar residues predominate over residues Ile181 to Leu197. A compositionally biased stretch (gly residues) spans Asn218–Val228. Residues Thr232 to Pro251 are compositionally biased toward polar residues. Residues Asn263–Gly277 are compositionally biased toward low complexity. Over residues Gly663 to Ser688 the composition is skewed to polar residues. Residues Gln801 to Thr826 show a composition bias toward low complexity. Polar residues predominate over residues Gln900 to Asp913. The segment covering Arg941–Ser974 has biased composition (low complexity).

Expressed in all imaginal cells of the embryo and larvae. Expressed in a subset of tracheal fusion cells from stage 14 to the end of embryogenesis in metameres 2-9, lateral trunk and ventral anastomoses.

It is found in the cytoplasm. In terms of biological role, required for imaginal cell differentiation, may be involved in hormonal responsiveness during metamorphosis. Involved in an inhibitory signaling mechanism to determine the number of cells that will form unicellular sprouts in the trachea. Regulated by transcription factor esg. The longer hdc protein is completely functional and the shorter protein carries some function. In Drosophila melanogaster (Fruit fly), this protein is Headcase protein.